Here is a 200-residue protein sequence, read N- to C-terminus: Endoribonuclease YbeY (200 aa).

The span at 1–18 shows a compositional bias: pro residues; that stretch reads MPADPALPDPVPPGPTAP. The disordered stretch occupies residues 1–22; the sequence is MPADPALPDPVPPGPTAPVPTD. Positions 151, 155, and 161 each coordinate Zn(2+).

Belongs to the endoribonuclease YbeY family. The cofactor is Zn(2+).

The protein resides in the cytoplasm. Single strand-specific metallo-endoribonuclease involved in late-stage 70S ribosome quality control and in maturation of the 3' terminus of the 16S rRNA. This is Endoribonuclease YbeY from Rhodospirillum rubrum (strain ATCC 11170 / ATH 1.1.1 / DSM 467 / LMG 4362 / NCIMB 8255 / S1).